Reading from the N-terminus, the 105-residue chain is Thioredoxin (105 aa).

The Thioredoxin domain occupies 2–105 (VKSVGNLADF…KLEETIKSLV (104 aa)). Residues cysteine 32 and cysteine 35 each act as nucleophile in the active site. Cysteine 32 and cysteine 35 are disulfide-bonded. S-nitrosocysteine occurs at positions 69 and 73.

It belongs to the thioredoxin family. Post-translationally, may be nitrosylated on several cysteine residues, depending on the oxidation state. Nitrosylated Cys-73 may serve as donor for nitrosylation of target proteins.

The protein resides in the nucleus. It is found in the cytoplasm. The protein localises to the secreted. Its function is as follows. Participates in various redox reactions through the reversible oxidation of its active center dithiol to a disulfide and catalyzes dithiol-disulfide exchange reactions. Plays a role in the reversible S-nitrosylation of cysteine residues in target proteins, and thereby contributes to the response to intracellular nitric oxide. Nitrosylates the active site Cys of CASP3 in response to nitric oxide (NO), and thereby inhibits caspase-3 activity. Induces the FOS/JUN AP-1 DNA binding activity in ionizing radiation (IR) cells through its oxidation/reduction status and stimulates AP-1 transcriptional activity. The protein is Thioredoxin (TXN) of Gallus gallus (Chicken).